A 48-amino-acid polypeptide reads, in one-letter code: MKVVSSIGSLKNRSKDCQIVKRRGRIYVICKTDPRLKVRQGGAKMKRK.

This sequence belongs to the bacterial ribosomal protein bL36 family.

The protein resides in the plastid. The protein localises to the chloroplast. The chain is Large ribosomal subunit protein bL36c (rpl36) from Guillardia theta (Cryptophyte).